Here is a 341-residue protein sequence, read N- to C-terminus: S-adenosylmethionine:tRNA ribosyltransferase-isomerase (341 aa).

This sequence belongs to the QueA family. As to quaternary structure, monomer.

The protein localises to the cytoplasm. It catalyses the reaction 7-aminomethyl-7-carbaguanosine(34) in tRNA + S-adenosyl-L-methionine = epoxyqueuosine(34) in tRNA + adenine + L-methionine + 2 H(+). It functions in the pathway tRNA modification; tRNA-queuosine biosynthesis. In terms of biological role, transfers and isomerizes the ribose moiety from AdoMet to the 7-aminomethyl group of 7-deazaguanine (preQ1-tRNA) to give epoxyqueuosine (oQ-tRNA). This chain is S-adenosylmethionine:tRNA ribosyltransferase-isomerase, found in Clostridium botulinum (strain Langeland / NCTC 10281 / Type F).